The primary structure comprises 122 residues: Large ribosomal subunit protein uL14 (122 aa).

Belongs to the universal ribosomal protein uL14 family. As to quaternary structure, part of the 50S ribosomal subunit. Forms a cluster with proteins L3 and L19. In the 70S ribosome, L14 and L19 interact and together make contacts with the 16S rRNA in bridges B5 and B8.

Its function is as follows. Binds to 23S rRNA. Forms part of two intersubunit bridges in the 70S ribosome. The protein is Large ribosomal subunit protein uL14 of Chlorobium phaeovibrioides (strain DSM 265 / 1930) (Prosthecochloris vibrioformis (strain DSM 265)).